Consider the following 1281-residue polypeptide: Enterobactin synthase component F (1281 aa).

The tract at residues 1–301 (MSQHLPLVAA…NVLPLGIHIA (301 aa)) is elongation/condensation. The tract at residues 486–891 (SYREMHEQVV…ALPDVKQAVT (406 aa)) is adenylation. Residues 975 to 1050 (APKAGSETII…KLATIIDGEE (76 aa)) form the Carrier domain. S1010 carries the post-translational modification O-(pantetheine 4'-phosphoryl)serine. The interval 1070-1281 (PTLFCFHPAS…GPIIRATLNR (212 aa)) is thioesterase. H1259 (proton acceptor; for thioesterase activity) is an active-site residue.

The protein belongs to the ATP-dependent AMP-binding enzyme family. EntF subfamily. As to quaternary structure, proteins EntB, EntD, EntE and EntF are the component of the enterobactin synthase. Components probably do not form a stable complex. EntF acts as a catalytic monomer. Pantetheine 4'-phosphate serves as cofactor. In terms of processing, 4'-phosphopantetheine is transferred from CoA to a specific serine of apo-EntF by EntD. Holo-EntF so formed is then acylated with seryl-AMP.

Its subcellular location is the cytoplasm. The enzyme catalyses 3 2,3-dihydroxybenzoate + 3 L-serine + 6 ATP = enterobactin + 6 AMP + 6 diphosphate + 4 H(+). It catalyses the reaction holo-[peptidyl-carrier protein] + L-serine + ATP = L-seryl-[peptidyl-carrier protein] + AMP + diphosphate. The protein operates within siderophore biosynthesis; enterobactin biosynthesis. Its function is as follows. Involved in the biosynthesis of the siderophore enterobactin (enterochelin), which is a macrocyclic trimeric lactone of N-(2,3-dihydroxybenzoyl)-serine. EntF catalyzes the activation of L-serine via ATP-dependent PPi exchange reaction to form seryladenylate. Activated L-serine is loaded onto the peptidyl carrier domain via a thioester linkage to the phosphopanthetheine moiety, forming seryl-S-Ppant-EntF. EntF acts then as the sole catalyst for the formation of the three amide and three ester linkages found in enterobactin, using seryladenylate and 2,3-dihydroxybenzoate-S-Ppant-EntB (DHB-S-Ppant-EntB) as substrates, via the formation of a DHB-Ser-S-Ppant-EntF intermediate. In Shigella flexneri, this protein is Enterobactin synthase component F (entF).